The chain runs to 545 residues: La-related protein 6B (545 aa).

The span at 1–10 (MADQQTLDSS) shows a compositional bias: polar residues. Disordered regions lie at residues 1-76 (MADQ…IPPP), 105-187 (LVPV…DSKT), and 382-545 (HQTK…VQAE). Residues 23–49 (SHSTSSTTSASSSSDPSLLRSLSLSRL) are compositionally biased toward low complexity. The span at 61 to 76 (TTPPLPQPPRMIIPPP) shows a compositional bias: pro residues. Basic residues predominate over residues 111–126 (HHPHHRFHQHHHHNRH). A compositionally biased stretch (basic and acidic residues) spans 154–173 (LVSKKNDRRDHSKRESKNDQ). Residues 174-185 (VTETGASVSIDS) show a composition bias toward polar residues. In terms of domain architecture, HTH La-type RNA-binding spans 187–278 (TGLPEDSIQK…RRISPITESA (92 aa)). The region spanning 285–383 (RIIVAENLPE…LKVRLMLKHQ (99 aa)) is the RRM domain. The segment covering 448-464 (GQRKGRNRGRGKGRGRG) has biased composition (basic residues). Over residues 465–478 (QPHQNQNQNNNHSH) the composition is skewed to low complexity. Over residues 479–497 (NQNHNHNGRGNHHHHHHHQ) the composition is skewed to basic residues. Residues 498–509 (VGTQPSNNPMNN) show a composition bias toward polar residues. Low complexity predominate over residues 510–519 (MEQPGMGKQQ).

It is found in the nucleus. Functionally, transcriptional regulator. The chain is La-related protein 6B (LARP6B) from Arabidopsis thaliana (Mouse-ear cress).